A 93-amino-acid chain; its full sequence is Alpha-defensin 5 (93 aa).

A signal peptide spans 1 to 19 (MKTFVLLSALVLLAFQVQA). A propeptide spanning residues 20–58 (DPIHKTDEETNTEEQPGEEDQAVSISFGGQEGSALHEEL) is cleaved from the precursor. Disulfide bonds link Cys64/Cys92, Cys66/Cys81, and Cys71/Cys91.

This sequence belongs to the alpha-defensin family.

It localises to the secreted. Its function is as follows. Probably contributes to the antimicrobial barrier function of the small bowel mucosa. This Mus musculus (Mouse) protein is Alpha-defensin 5 (Defa5).